A 355-amino-acid polypeptide reads, in one-letter code: Peptide chain release factor 1 (355 aa).

Glutamine 232 bears the N5-methylglutamine mark.

This sequence belongs to the prokaryotic/mitochondrial release factor family. Post-translationally, methylated by PrmC. Methylation increases the termination efficiency of RF1.

The protein resides in the cytoplasm. Its function is as follows. Peptide chain release factor 1 directs the termination of translation in response to the peptide chain termination codons UAG and UAA. The protein is Peptide chain release factor 1 of Thermobifida fusca (strain YX).